A 475-amino-acid polypeptide reads, in one-letter code: Citrate synthase, mitochondrial (475 aa).

Catalysis depends on residues His310, His356, and Asp411.

The protein belongs to the citrate synthase family.

It localises to the mitochondrion matrix. The catalysed reaction is oxaloacetate + acetyl-CoA + H2O = citrate + CoA + H(+). It functions in the pathway carbohydrate metabolism; tricarboxylic acid cycle; isocitrate from oxaloacetate: step 1/2. The chain is Citrate synthase, mitochondrial (cit-1) from Aspergillus niger.